The sequence spans 253 residues: MTKTEKKLRHYITKAIADYKLLDKGDKVMLCLSGGKDSFGLLKVLHGLIEDKTYDIDLHVYTLDQSQPGWDDSQLRKYLDDLGVSYEIETKNTYGVVIDKVPEGKTYCSLCSRLRRGNIYRYAKEHKMDKIILGHHRDDLIQSLLMSILYQGQIKSMPPKFVTQDGENTVIRPMVLVQERDLIEFAKEENFPIIPCNLCGSQENLKRKKVKKLIQDLALENPKVPSNILNSLSNVLPSHLMDRNLFDIDATIK.

The PP-loop motif motif lies at 33-38 (SGGKDS). Residues Cys108, Cys111, and Cys199 each contribute to the [4Fe-4S] cluster site.

Belongs to the TtcA family. Homodimer. Mg(2+) serves as cofactor. The cofactor is [4Fe-4S] cluster.

It localises to the cytoplasm. It carries out the reaction cytidine(32) in tRNA + S-sulfanyl-L-cysteinyl-[cysteine desulfurase] + AH2 + ATP = 2-thiocytidine(32) in tRNA + L-cysteinyl-[cysteine desulfurase] + A + AMP + diphosphate + H(+). Its pathway is tRNA modification. In terms of biological role, catalyzes the ATP-dependent 2-thiolation of cytidine in position 32 of tRNA, to form 2-thiocytidine (s(2)C32). The sulfur atoms are provided by the cysteine/cysteine desulfurase (IscS) system. In Francisella tularensis subsp. novicida (strain U112), this protein is tRNA-cytidine(32) 2-sulfurtransferase 2.